Consider the following 420-residue polypeptide: Mannose-1-phosphate guanylyltransferase regulatory subunit alpha (420 aa).

Residues 2–251 (LKAVILIGGP…DGIWSQIKSA (250 aa)) are substrate-binding domain. Positions 85 and 247 each coordinate GDP-alpha-D-mannose. The segment at 273-420 (LAKHTPGGPR…SRSFTNQIIL (148 aa)) is hexapeptide repeat domain. Residues 356–384 (TPNDPNPNDPRARMDSESLFKDGKLLPAI) are C-loop.

This sequence belongs to the transferase hexapeptide repeat family. In terms of assembly, component of the GMPPA-GMPPB mannose-1-phosphate guanylyltransferase complex composed of 4 GMPPA subunits and 8 GMPPB subunits; the complex is organized into three layers, a central layer made up of 2 GMPPA dimers sandwiched between two layers each made up of 2 GMPPB dimers.

Its subcellular location is the cytoplasm. In terms of biological role, regulatory subunit of the GMPPA-GMPPB mannose-1-phosphate guanylyltransferase complex; reduces the catalytic activity of GMPPB when part of the complex. Mediates allosteric feedback inhibition of GMPPB catalytic activity upon binding GDP-alpha-D-mannose. Together with GMPPB regulates GDP-alpha-D-mannose levels. In Papio anubis (Olive baboon), this protein is Mannose-1-phosphate guanylyltransferase regulatory subunit alpha (GMPPA).